The sequence spans 429 residues: Ribosomal RNA small subunit methyltransferase B (429 aa).

S-adenosyl-L-methionine is bound by residues cysteine 254–lysine 260, aspartate 277, aspartate 303, and aspartate 322. Catalysis depends on cysteine 375, which acts as the Nucleophile. Positions alanine 397–aspartate 419 are disordered. Residues glutamate 400–leucine 412 are compositionally biased toward polar residues.

The protein belongs to the class I-like SAM-binding methyltransferase superfamily. RsmB/NOP family.

It is found in the cytoplasm. The enzyme catalyses cytidine(967) in 16S rRNA + S-adenosyl-L-methionine = 5-methylcytidine(967) in 16S rRNA + S-adenosyl-L-homocysteine + H(+). Its function is as follows. Specifically methylates the cytosine at position 967 (m5C967) of 16S rRNA. The sequence is that of Ribosomal RNA small subunit methyltransferase B from Salmonella paratyphi B (strain ATCC BAA-1250 / SPB7).